The chain runs to 536 residues: Formate--tetrahydrofolate ligase (536 aa).

51-58 (TAAGEGKT) is a binding site for ATP.

Belongs to the formate--tetrahydrofolate ligase family.

It carries out the reaction (6S)-5,6,7,8-tetrahydrofolate + formate + ATP = (6R)-10-formyltetrahydrofolate + ADP + phosphate. The protein operates within one-carbon metabolism; tetrahydrofolate interconversion. This is Formate--tetrahydrofolate ligase from Thermoplasma volcanium (strain ATCC 51530 / DSM 4299 / JCM 9571 / NBRC 15438 / GSS1).